The primary structure comprises 479 residues: ESX-1 secretion system ATPase EccB1 (479 aa).

At methionine 1–alanine 44 the chain is on the cytoplasmic side. The chain crosses the membrane as a helical span at residues valine 45–phenylalanine 65. At lysine 66–glycine 479 the chain is on the periplasmic side. Cysteine 152 and cysteine 347 are oxidised to a cystine.

Belongs to the EccB family. In terms of assembly, part of the ESX-1 / type VII secretion system (T7SS), which is composed of cytosolic and membrane components. The ESX-1 membrane complex is composed of EccB1, EccCa1, EccCb1, EccD1 and EccE1.

The protein resides in the cell inner membrane. In terms of biological role, an ATPase. Part of the ESX-1 / type VII specialized secretion system (T7SS), which exports several proteins including EsxA and EsxB. Plays a role in DNA conjugation, in both donor and recipient strains. This Mycolicibacterium smegmatis (strain MKD8) (Mycobacterium smegmatis) protein is ESX-1 secretion system ATPase EccB1.